The sequence spans 243 residues: Pyridoxine 5'-phosphate synthase (243 aa).

Asparagine 9 is a binding site for 3-amino-2-oxopropyl phosphate. 11–12 lines the 1-deoxy-D-xylulose 5-phosphate pocket; that stretch reads DH. Arginine 20 contributes to the 3-amino-2-oxopropyl phosphate binding site. Histidine 45 serves as the catalytic Proton acceptor. Positions 47 and 52 each coordinate 1-deoxy-D-xylulose 5-phosphate. Residue glutamate 72 is the Proton acceptor of the active site. Threonine 102 is a 1-deoxy-D-xylulose 5-phosphate binding site. The Proton donor role is filled by histidine 193. Residues glycine 194 and 215–216 each bind 3-amino-2-oxopropyl phosphate; that span reads GH.

Belongs to the PNP synthase family. As to quaternary structure, homooctamer; tetramer of dimers.

It localises to the cytoplasm. The catalysed reaction is 3-amino-2-oxopropyl phosphate + 1-deoxy-D-xylulose 5-phosphate = pyridoxine 5'-phosphate + phosphate + 2 H2O + H(+). It participates in cofactor biosynthesis; pyridoxine 5'-phosphate biosynthesis; pyridoxine 5'-phosphate from D-erythrose 4-phosphate: step 5/5. Catalyzes the complicated ring closure reaction between the two acyclic compounds 1-deoxy-D-xylulose-5-phosphate (DXP) and 3-amino-2-oxopropyl phosphate (1-amino-acetone-3-phosphate or AAP) to form pyridoxine 5'-phosphate (PNP) and inorganic phosphate. This Pectobacterium atrosepticum (strain SCRI 1043 / ATCC BAA-672) (Erwinia carotovora subsp. atroseptica) protein is Pyridoxine 5'-phosphate synthase.